The sequence spans 391 residues: 3-ketoacyl-CoA thiolase (391 aa).

The active-site Acyl-thioester intermediate is the Cys95. Active-site proton acceptor residues include His347 and Cys377.

Belongs to the thiolase-like superfamily. Thiolase family. In terms of assembly, heterotetramer of two alpha chains (FadB) and two beta chains (FadA).

The protein resides in the cytoplasm. It catalyses the reaction an acyl-CoA + acetyl-CoA = a 3-oxoacyl-CoA + CoA. It participates in lipid metabolism; fatty acid beta-oxidation. Functionally, catalyzes the final step of fatty acid oxidation in which acetyl-CoA is released and the CoA ester of a fatty acid two carbons shorter is formed. The chain is 3-ketoacyl-CoA thiolase from Alcanivorax borkumensis (strain ATCC 700651 / DSM 11573 / NCIMB 13689 / SK2).